We begin with the raw amino-acid sequence, 184 residues long: Ras-related protein Rap-1b (184 aa).

A GTP-binding site is contributed by 10–18; sequence GSGGVGKSA. Residues 25-67 form an interaction with KRIT1 region; it reads QGIFVEKYDPTIEDSYRKQVEVDAQQCMLEILDTAGTEQFTAM. The Effector region signature appears at 32–40; that stretch reads YDPTIEDSY. An ADP-ribosylserine; by botulinum toxin modification is found at Ser39. Residues 57–61, 116–119, and 147–149 each bind GTP; these read DTAGT, NKCD, and SAK. At Ser179 the chain carries Phosphoserine; by PKA. Cys181 is modified (cysteine methyl ester). Cys181 carries the S-geranylgeranyl cysteine lipid modification. Residues 182–184 constitute a propeptide, removed in mature form; it reads QLL.

This sequence belongs to the small GTPase superfamily. Ras family. As to quaternary structure, heterodimer with RAP1GAP. Interacts with EPAC2. Interacts with SGSM1. Interacts with SGSM2. Interacts with SGSM3. Interacts with KRIT1. Interacts with RAP1GDS1.

The protein localises to the cell membrane. It localises to the cytoplasm. The protein resides in the cytosol. It is found in the cell junction. The enzyme catalyses GTP + H2O = GDP + phosphate + H(+). With respect to regulation, activated by guanine nucleotide-exchange factor (GEF) EPAC2 in a cAMP-dependent manner. In terms of biological role, GTP-binding protein that possesses intrinsic GTPase activity. Contributes to the polarizing activity of KRIT1 and CDH5 in the establishment and maintenance of correct endothelial cell polarity and vascular lumen. Required for the localization of phosphorylated PRKCZ, PARD3 and TIAM1 to the cell junction. Plays a role in the establishment of basal endothelial barrier function. This chain is Ras-related protein Rap-1b (Rap1b), found in Rattus norvegicus (Rat).